Reading from the N-terminus, the 636-residue chain is p-hydroxybenzoate-m-hydroxylase A (636 aa).

Residues 10-39, 241-243, tyrosine 289, and aspartate 310 contribute to the FAD site; these read DIVI…HIDN and RLY. A helical transmembrane segment spans residues 11 to 28; it reads IVIVGAGPVGIVLSLCMS.

This sequence belongs to the PheA/TfdB FAD monooxygenase family. It depends on FAD as a cofactor.

The protein resides in the membrane. It carries out the reaction 4-hydroxybenzoate + NADH + O2 + H(+) = 3,4-dihydroxybenzoate + NAD(+) + H2O. The enzyme catalyses 4-hydroxybenzoate + NADPH + O2 + H(+) = 3,4-dihydroxybenzoate + NADP(+) + H2O. FAD-dependent monooxygenase; part of the benzoic acid degradation pathway also known as the protocatechuic acid pathway. Benzoic acid debradation begins with the conversion of benzoic acid into 4-hydroxybenzoic acid through hydroxylation by the benzoate-4-monooxygenase bphA, and its partner NADPH-cytochrome P450 reductase cprA which act as a mediator in electron donation from NADPH. 4-Hydroxybenzoic acid is then converted into 3,4-dihydroxybenzoic acid (also called protocatechuic acid) by the p-hydroxybenzoate-m-hydroxylase phhA. Protocatechuic acid is converted into 3-carboxy-cis,cis-muconic acid by the intradiol ring-cleavage dioxygenase prcA, which is further metabolized through the 3-oxoadipate pathway to finally enter the tricarboxylic acid cycle (TCA). This Aspergillus niger (strain ATCC MYA-4892 / CBS 513.88 / FGSC A1513) protein is p-hydroxybenzoate-m-hydroxylase A.